The chain runs to 411 residues: Small ribosomal subunit protein bS1c (411 aa).

A chloroplast-targeting transit peptide spans 1 to 41 (MASLAQQLAGGLRCPPLSNSNLSKPFSPKHTLKPRFSPIVS). S1 motif domains lie at 96 to 166 (GSRV…LSLR), 184 to 248 (DVVV…MSNR), and 261 to 329 (GSVV…LSTK).

It belongs to the bacterial ribosomal protein bS1 family. Component of the chloroplast small ribosomal subunit (SSU). Mature 70S chloroplast ribosomes of higher plants consist of a small (30S) and a large (50S) subunit. The 30S small subunit contains 1 molecule of ribosomal RNA (16S rRNA) and 24 different proteins. The 50S large subunit contains 3 rRNA molecules (23S, 5S and 4.5S rRNA) and 33 different proteins.

The protein resides in the plastid. Its subcellular location is the chloroplast. In terms of biological role, component of the chloroplast ribosome (chloro-ribosome), a dedicated translation machinery responsible for the synthesis of chloroplast genome-encoded proteins, including proteins of the transcription and translation machinery and components of the photosynthetic apparatus. Actively engaged in the initiation complex formation via a strong mRNA-binding activity. Possesses a poly(A)-binding activity which might play a role as a control element in chloroplast mRNA translation. The protein is Small ribosomal subunit protein bS1c (RPS1) of Spinacia oleracea (Spinach).